A 2327-amino-acid polypeptide reads, in one-letter code: MTSTHVATLGVGAQAPPRHQKKSAGTAFVSSGSSRPSYRKNGQRTRSLREESNGGVSDSKKLNHSIRQGLAGIIDLPNDAASEVDISHGSEDPRGPTVPGSYQMNGIINETHNGRHASVSKVVEFCTALGGKTPIHSVLVANNGMAAAKFMRSVRTWANDTFGSEKAIQLIAMATPEDLRINAEHIRIADQFVEVPGGTNNNNYANVQLIVEIAERTGVSAVWPGWGHASENPELPDALTAKGIVFLGPPASSMHALGDKVGSALIAQAAGVPTLAWSGSHVEVPLECCLDSIPDEMYRKACVTTTEEAVASCQVVGYPAMIKASWGGGGKGIRKVHNDDEVRTLFKQVQGEVPGSPIFIMRLAAQSRHLEVQLLCDQYGNVAALHSRDCSVQRRHQKIIEEGPVTVAPRETVKELEQAARRLAKAVGYVGAATVEYLYSMETGEYYFLELNPRLQVEHPVTEWIAEVNLPAAQVAVGMGIPLWQIPEIRRFYGMNHGGGYDLWRKTAALATPFNFDEVDSKWPKGHCVAVRITSEDPDDGFKPTGGKVKEISFKSKPNVWAYFSVKSGGGIHEFADSQFGHVFAYGTTRSAAITTMALALKEVQIRGEIHSNVDYTVDLLNASDFRENKIHTGWLDTRIAMRVQAERPPWYISVVGGALYKTVTANTATVSDYVGYLTKGQIPPKHISLVYTTVALNIDGKKYTIDTVRSGHGSYRLRMNGSTVDANVQILCDGGLLMQLDGNSHVIYAEEEASGTRLLIDGKTCMLQNDHDPSKLLAETPCKLLRFLVADGAHVDADVPYAEVEVMKMCMPLLSPASGVIHVVMSEGQAMQAGDLIARLDLDDPSAVKRAEPFEDTFPQMGLPIAASGQVHKLCAASLNACRMILAGYEHDIDKVVPELVYCLDTPELPFLQWEELMSVLATRLPRNLKSELEGKYEEYKVKFDSGIINDFPANMLRVIIEENLACGSEKEKATNERLVEPLMSLLKSYEGGRESHAHFVVKSLFEEYLYVEELFSDGIQSDVIERLRLQHSKDLQKVVDIVLSHQSVRNKTKLILKLMESLVYPNPAAYRDQLIRFSSLNHKAYYKLALKASELLEQTKLSELRARIARSLSELEMFTEESKGLSMHKREIAIKESMEDLVTAPLPVEDALISLFDCSDTTVQQRVIETYIARLYQPHLVKDSIKMKWIESGVIALWEFPEGHFDARNGGAVLGDKRWGAMVIVKSLESLSMAIRFALKETSHYTSSEGNMMHIALLGADNKMHIIQESGDDADRIAKLPLILKDNVTDLHASGVKTISFIVQRDEARMTMRRTFLWSDEKLSYEEEPILRHVEPPLSALLELDKLKVKGYNEMKYTPSRDRQWHIYTLRNTENPKMLHRVFFRTLVRQPSVSNKFSSGQIGDMEVGSAEEPLSFTSTSILRSLMTAIEELELHAIRTGHSHMYLHVLKEQKLLDLVPVSGNTVLDVGQDEATAYSLLKEMAMKIHELVGARMHHLSVCQWEVKLKLDCDGPASGTWRIVTTNVTSHTCTVDIYREMEDKESRKLVYHPATPAAGPLHGVALNNPYQPLSVIDLKRCSARNNRTTYCYDFPLAFETAVRKSWSSSTSGASKGVENAQCYVKATELVFADKHGSWGTPLVQMDRPAGLNDIGMVAWTLKMSTPEFPSGREIIVVANDITFRAGSFGPREDAFFEAVTNLACEKKLPLIYLAANSGARIGIADEVKSCFRVGWSDDGSPERGFQYIYLSEEDYARIGTSVIAHKMQLDSGEIRWVIDSVVGKEDGLGVENIHGSAAIASAYSRAYKETFTLTFVTGRTVGIGAYLARLGIRCIQRLDQPIILTGYSALNKLLGREVYSSHMQLGGPKIMATNGVVHLTVSDDLEGVSNILRWLSYVPAYIGGPLPVTTPLDPPDRPVAYIPENSCDPRAAIRGVDDSQGKWLGGMFDKDSFVETFEGWAKTVVTGRAKLGGIPVGVIAVETQTMMQTIPADPGQLDSREQSVPRAGQVWFPDSATKTAQALLDFNREGLPLFILANWRGFSGGQRDLFEGILQAGSTIVENLRTYNQPAFVYIPMAAELRGGAWVVVDSKINPDRIECYAERTAKGNVLEPQGLIEIKFRSEELQDCMSRLDPTLIDLKAKLEVANKNGSADTKSLQENIEARTKQLMPLYTQIAIRFAELHDTSLRMAAKGVIKKVVDWEESRSFFYKRLRRRISEDVLAKEIRAVAGEQFSHQPAIELIKKWYSASHAAEWDDDDAFVAWMDNPENYKDYIQYLKAQRVSQSLSSLSDSSSDLQALPQGLSMLLDKMDPSRRAQLVEEIRKVLG.

The interval 1–62 is disordered; that stretch reads MTSTHVATLG…NGGVSDSKKL (62 aa). Residues 134–641 enclose the Biotin carboxylation domain; the sequence is PIHSVLVANN…HTGWLDTRIA (508 aa). The ATP-grasp domain occupies 287–481; sequence ECCLDSIPDE…AAQVAVGMGI (195 aa). 313–370 is a binding site for ATP; sequence CQVVGYPAMIKASWGGGGKGIRKVHNDDEVRTLFKQVQGEVPGSPIFIMRLAAQSRHL. 3 residues coordinate Mg(2+): Glu-436, Glu-450, and Asn-452. Residues Glu-436, Glu-450, and Asn-452 each contribute to the Mn(2+) site. Arg-454 is an active-site residue. The Biotinyl-binding domain occupies 768 to 842; sequence LQNDHDPSKL…QAGDLIARLD (75 aa). The residue at position 809 (Lys-809) is an N6-biotinyllysine. The CoA carboxyltransferase N-terminal domain occupies 1568–1909; it reads PYQPLSVIDL…YIGGPLPVTT (342 aa). The carboxyltransferase stretch occupies residues 1568–2227; sequence PYQPLSVIDL…EDVLAKEIRA (660 aa). Residues Arg-1818, Lys-2119, and Arg-2121 each coordinate CoA. Residues 1913–2227 enclose the CoA carboxyltransferase C-terminal domain; it reads PPDRPVAYIP…EDVLAKEIRA (315 aa).

In terms of assembly, homodimer. Biotin serves as cofactor. Requires Mg(2+) as cofactor. It depends on Mn(2+) as a cofactor.

Its subcellular location is the cytoplasm. The protein localises to the cytosol. It carries out the reaction hydrogencarbonate + acetyl-CoA + ATP = malonyl-CoA + ADP + phosphate + H(+). The catalysed reaction is N(6)-biotinyl-L-lysyl-[protein] + hydrogencarbonate + ATP = N(6)-carboxybiotinyl-L-lysyl-[protein] + ADP + phosphate + H(+). It participates in lipid metabolism; malonyl-CoA biosynthesis; malonyl-CoA from acetyl-CoA: step 1/1. Its function is as follows. Multifunctional enzyme that catalyzes the carboxylation of acetyl-CoA, forming malonyl-CoA, which is used in the plastid for fatty acid synthesis and in the cytosol in various biosynthetic pathways including fatty acid elongation. The polypeptide is Acetyl-CoA carboxylase 2 (ACC2) (Oryza sativa subsp. japonica (Rice)).